The following is a 558-amino-acid chain: 2-isopropylmalate synthase (558 aa).

In terms of domain architecture, Pyruvate carboxyltransferase spans 30–303 (PIWCSVDLRD…DPGIDCSDIN (274 aa)). Mg(2+) is bound by residues aspartate 39, histidine 242, histidine 244, and asparagine 278. The segment at 437 to 558 (QPGARLKFLD…ANRIVGRKAR (122 aa)) is regulatory domain.

The protein belongs to the alpha-IPM synthase/homocitrate synthase family. LeuA type 2 subfamily. Homodimer. It depends on Mg(2+) as a cofactor.

The protein localises to the cytoplasm. It catalyses the reaction 3-methyl-2-oxobutanoate + acetyl-CoA + H2O = (2S)-2-isopropylmalate + CoA + H(+). It functions in the pathway amino-acid biosynthesis; L-leucine biosynthesis; L-leucine from 3-methyl-2-oxobutanoate: step 1/4. Functionally, catalyzes the condensation of the acetyl group of acetyl-CoA with 3-methyl-2-oxobutanoate (2-ketoisovalerate) to form 3-carboxy-3-hydroxy-4-methylpentanoate (2-isopropylmalate). The chain is 2-isopropylmalate synthase from Mesorhizobium japonicum (strain LMG 29417 / CECT 9101 / MAFF 303099) (Mesorhizobium loti (strain MAFF 303099)).